A 197-amino-acid chain; its full sequence is Holliday junction branch migration complex subunit RuvA (197 aa).

Residues 1-63 are domain I; the sequence is MYDYIKGNLT…EDAHLLYGFH (63 aa). Residues 64-142 form a domain II region; the sequence is TEDEKAVFLN…DINEVSTDKS (79 aa). Positions 143–147 are flexible linker; the sequence is KVSTI. The segment at 148 to 197 is domain III; the sequence is NNNQELEEAVEALLALGYKTNELKKIEKFFEGTTDTAENYIKSALKMLMK.

This sequence belongs to the RuvA family. In terms of assembly, homotetramer. Forms an RuvA(8)-RuvB(12)-Holliday junction (HJ) complex. HJ DNA is sandwiched between 2 RuvA tetramers; dsDNA enters through RuvA and exits via RuvB. An RuvB hexamer assembles on each DNA strand where it exits the tetramer. Each RuvB hexamer is contacted by two RuvA subunits (via domain III) on 2 adjacent RuvB subunits; this complex drives branch migration. In the full resolvosome a probable DNA-RuvA(4)-RuvB(12)-RuvC(2) complex forms which resolves the HJ.

The protein localises to the cytoplasm. The RuvA-RuvB-RuvC complex processes Holliday junction (HJ) DNA during genetic recombination and DNA repair, while the RuvA-RuvB complex plays an important role in the rescue of blocked DNA replication forks via replication fork reversal (RFR). RuvA specifically binds to HJ cruciform DNA, conferring on it an open structure. The RuvB hexamer acts as an ATP-dependent pump, pulling dsDNA into and through the RuvAB complex. HJ branch migration allows RuvC to scan DNA until it finds its consensus sequence, where it cleaves and resolves the cruciform DNA. The sequence is that of Holliday junction branch migration complex subunit RuvA from Streptococcus mutans serotype c (strain ATCC 700610 / UA159).